A 531-amino-acid chain; its full sequence is UDP-glucuronosyltransferase 1A7 (531 aa).

A signal peptide spans 1-25 (MAPADFPASLPLCVCLLLASGLAQA). N-linked (GlcNAc...) asparagine glycosylation is found at asparagine 293 and asparagine 431. A helical membrane pass occupies residues 489–509 (VIGFLLAIVLTVVFIVFKCCA).

The protein belongs to the UDP-glycosyltransferase family. As to quaternary structure, homodimer. Homooligomer. Interacts with UGT1A1, UGT1A3, UGT1A4, UGT1A6, UGT1A8, UGT1A9 and UGT1A10 to form heterodimers. Widely expressed with highest levels detected in colon and kidney.

Its subcellular location is the endoplasmic reticulum membrane. The enzyme catalyses glucuronate acceptor + UDP-alpha-D-glucuronate = acceptor beta-D-glucuronoside + UDP + H(+). The catalysed reaction is 17alpha-estradiol + UDP-alpha-D-glucuronate = 17alpha-estradiol 3-O-(beta-D-glucuronate) + UDP + H(+). It catalyses the reaction prunetin + UDP-alpha-D-glucuronate = prunetin-5-O-beta-D-glucuronide + UDP. It carries out the reaction 5-epi-5-F2t-IsoP + UDP-alpha-D-glucuronate = 5-epi-5-F2t-IsoP-glucuronide + UDP + H(+). The enzyme catalyses (E)-ferulate + UDP-alpha-D-glucuronate = (E)-ferulic acid beta-D-glucuronate ester + UDP. The catalysed reaction is candesartan + UDP-alpha-D-glucuronate = candesartan O-beta-D-glucuronoside + UDP. It catalyses the reaction SN-38 + UDP-alpha-D-glucuronate = SN-38 O-beta-D-glucuronide + UDP + H(+). It carries out the reaction mycophenolate + UDP-alpha-D-glucuronate = mycophenolate 7-O-beta-D-glucuronide + UDP + H(+). Its function is as follows. UDP-glucuronosyltransferase (UGT) that catalyzes phase II biotransformation reactions in which lipophilic substrates are conjugated with glucuronic acid to increase the metabolite's water solubility, thereby facilitating excretion into either the urine or bile. Essential for the elimination and detoxification of drugs, xenobiotics and endogenous compounds. Catalyzes the glucuronidation of endogenous estrogen hormone epiestradiol. Involved in the glucuronidation of F2-isoprostane (5-epi-5-F2t-IsoP). Involved in the glucuronidation of the phytochemical ferulic acid at the carboxylic acid group. Also catalyzes the glucuronidation of the isoflavones genistein, daidzein, glycitein, formononetin, biochanin A and prunetin, which are phytoestrogens with anticancer and cardiovascular properties. Involved in the glucuronidation of the AGTR1 angiotensin receptor antagonist caderastan, a drug which can inhibit the effect of angiotensin II. Involved in the biotransformation of 7-ethyl-10-hydroxycamptothecin (SN-38), the pharmacologically active metabolite of the anticancer drug irinotecan. Also metabolizes mycophenolate, an immunosuppressive agent. The protein is UDP-glucuronosyltransferase 1A7 of Mus musculus (Mouse).